Reading from the N-terminus, the 342-residue chain is MKAELPEPLKKDGFGEYKLMPESIDDLWHLSHLISPGNTVYAVTLRTVDGPSDKLRSEKLEKRPVRIGVKCEKAEFVPESSRLRVFGVISYGPDMGQHHTLNIEAGYEISVVRQWRQIDLARLERAVSSSVHGVVHIAAIEDGEAELYRVRQYGPERITTLTVGSGKTAELDSRQALFAELLTFLEKVTGSIVIAGPGFVKEDFVKFAKTKAPEIAERMLIADTRRCGYGAVQEAIGNGVLTRVAEDLQLAKEVSFMDEVFLRIGQNGAVAYGKSEVRQAIDYGAAETILVADSFVKDGGIEKMIEGAERLGANVVVLSTEFEPGTRLVGLGGVAALLRYKI.

This sequence belongs to the eukaryotic release factor 1 family. Pelota subfamily. As to quaternary structure, monomer. Requires a divalent metal cation as cofactor.

It is found in the cytoplasm. Its function is as follows. May function in recognizing stalled ribosomes, interact with stem-loop structures in stalled mRNA molecules, and effect endonucleolytic cleavage of the mRNA. May play a role in the release non-functional ribosomes and degradation of damaged mRNAs. Has endoribonuclease activity. The chain is Protein pelota homolog from Methanocorpusculum labreanum (strain ATCC 43576 / DSM 4855 / Z).